A 164-amino-acid polypeptide reads, in one-letter code: R-phycoerythrin alpha chain (164 aa).

2 residues coordinate (2R,3E)-phycoerythrobilin: Cys82 and Cys139.

It belongs to the phycobiliprotein family. In terms of assembly, heterodimer of an alpha and a beta chain. Post-translationally, contains two covalently linked bilin chromophores.

It localises to the plastid. The protein localises to the chloroplast thylakoid membrane. Functionally, light-harvesting photosynthetic bile pigment-protein from the phycobiliprotein complex. The protein is R-phycoerythrin alpha chain (cpeA) of Pyropia tenera (Nori).